The chain runs to 344 residues: Biotin synthase (344 aa).

A Radical SAM core domain is found at 36 to 260; it reads NQIQISTLLS…MMPTSYIRLS (225 aa). 3 residues coordinate [4Fe-4S] cluster: Cys51, Cys55, and Cys58. [2Fe-2S] cluster is bound by residues Cys95, Cys126, Cys186, and Arg258.

The protein belongs to the radical SAM superfamily. Biotin synthase family. Homodimer. Requires [4Fe-4S] cluster as cofactor. It depends on [2Fe-2S] cluster as a cofactor.

It carries out the reaction (4R,5S)-dethiobiotin + (sulfur carrier)-SH + 2 reduced [2Fe-2S]-[ferredoxin] + 2 S-adenosyl-L-methionine = (sulfur carrier)-H + biotin + 2 5'-deoxyadenosine + 2 L-methionine + 2 oxidized [2Fe-2S]-[ferredoxin]. The protein operates within cofactor biosynthesis; biotin biosynthesis; biotin from 7,8-diaminononanoate: step 2/2. In terms of biological role, catalyzes the conversion of dethiobiotin (DTB) to biotin by the insertion of a sulfur atom into dethiobiotin via a radical-based mechanism. In Buchnera aphidicola subsp. Baizongia pistaciae (strain Bp), this protein is Biotin synthase.